Reading from the N-terminus, the 473-residue chain is RuvB-like helicase 2 (473 aa).

An ATP-binding site is contributed by 76–83; that stretch reads GPPSTGKT.

The protein belongs to the RuvB family. May form heterododecamers with RVB1. Component of the SWR1 chromatin remodeling complex, the INO80 chromatin remodeling complex, and of the R2TP complex.

The protein localises to the nucleus. The enzyme catalyses ATP + H2O = ADP + phosphate + H(+). In terms of biological role, DNA helicase which participates in several chromatin remodeling complexes, including the SWR1 and the INO80 complexes. The SWR1 complex mediates the ATP-dependent exchange of histone H2A for the H2A variant HZT1 leading to transcriptional regulation of selected genes by chromatin remodeling. The INO80 complex remodels chromatin by shifting nucleosomes and is involved in DNA repair. Also involved in pre-rRNA processing. This Gibberella zeae (strain ATCC MYA-4620 / CBS 123657 / FGSC 9075 / NRRL 31084 / PH-1) (Wheat head blight fungus) protein is RuvB-like helicase 2 (RVB2).